Here is a 710-residue protein sequence, read N- to C-terminus: Elongation factor G (710 aa).

A tr-type G domain is found at 8 to 297; it reads ERVRNIGIAA…AVVDYLPSPI (290 aa). GTP contacts are provided by residues 17–24, 96–100, and 150–153; these read AHIDAGKT, DTPGH, and NKMD.

This sequence belongs to the TRAFAC class translation factor GTPase superfamily. Classic translation factor GTPase family. EF-G/EF-2 subfamily.

Its subcellular location is the cytoplasm. In terms of biological role, catalyzes the GTP-dependent ribosomal translocation step during translation elongation. During this step, the ribosome changes from the pre-translocational (PRE) to the post-translocational (POST) state as the newly formed A-site-bound peptidyl-tRNA and P-site-bound deacylated tRNA move to the P and E sites, respectively. Catalyzes the coordinated movement of the two tRNA molecules, the mRNA and conformational changes in the ribosome. This Synechococcus sp. (strain JA-3-3Ab) (Cyanobacteria bacterium Yellowstone A-Prime) protein is Elongation factor G.